We begin with the raw amino-acid sequence, 310 residues long: Protein CUP-SHAPED COTYLEDON 1 (310 aa).

In terms of domain architecture, NAC spans 20–172 (MPPGFRFHPT…EWVLCKVCLK (153 aa)). Residues 119-178 (LGMKKTLVFYKGRAPKGEKSCWVMHEYRLDGKFSYHYISSSAKDEWVLCKVCLKSGVVSR) mediate DNA binding. 2 involved in transactivation activity regions span residues 179–210 (ETNL…NTFA) and 306–310 (WPFTL).

In terms of tissue distribution, expressed in inflorescence stems, rosette leaves, aerial parts of seedlings, flowers, floral buds and roots.

The protein localises to the nucleus. Functionally, transcription activator of STM and KNAT6. Involved in molecular mechanisms regulating shoot apical meristem (SAM) formation during embryogenesis and organ separation. Required for the fusion of septa of gynoecia along the length of the ovaries. Activates the shoot formation in callus in a STM-dependent manner. Seems to act as an inhibitor of cell division. This chain is Protein CUP-SHAPED COTYLEDON 1 (NAC054), found in Arabidopsis thaliana (Mouse-ear cress).